Here is a 320-residue protein sequence, read N- to C-terminus: ATP-dependent 6-phosphofructokinase (320 aa).

G12 is an ATP binding site. Residues 22–26 (RGVVR) and 55–60 (RYSVSD) contribute to the ADP site. Residues 73–74 (RF) and 103–106 (GDGS) each bind ATP. Residue D104 coordinates Mg(2+). 126–128 (TID) is a binding site for substrate. Catalysis depends on D128, which acts as the Proton acceptor. R155 is a binding site for ADP. Substrate contacts are provided by residues R163 and 170–172 (MGR). ADP is bound by residues 186–188 (GCE), K212, and 214–216 (KKH). Substrate is bound by residues E223, R244, and 250–253 (HIQR).

This sequence belongs to the phosphofructokinase type A (PFKA) family. ATP-dependent PFK group I subfamily. Prokaryotic clade 'B1' sub-subfamily. In terms of assembly, homotetramer. It depends on Mg(2+) as a cofactor.

Its subcellular location is the cytoplasm. The enzyme catalyses beta-D-fructose 6-phosphate + ATP = beta-D-fructose 1,6-bisphosphate + ADP + H(+). The protein operates within carbohydrate degradation; glycolysis; D-glyceraldehyde 3-phosphate and glycerone phosphate from D-glucose: step 3/4. Its activity is regulated as follows. Allosterically activated by ADP and other diphosphonucleosides, and allosterically inhibited by phosphoenolpyruvate. Catalyzes the phosphorylation of D-fructose 6-phosphate to fructose 1,6-bisphosphate by ATP, the first committing step of glycolysis. In Salmonella agona (strain SL483), this protein is ATP-dependent 6-phosphofructokinase.